A 132-amino-acid chain; its full sequence is FPRL1 inhibitory protein (132 aa).

The first 28 residues, 1 to 28 (MKKNITKVIIASTVIATGLLTQTNDAKA), serve as a signal peptide directing secretion.

This sequence belongs to the CHIPS/FLIPr family.

It localises to the secreted. In terms of biological role, may be involved in countering the first line of host defense mechanisms. Impairs the leukocyte response to FPRL1 agonists by binding directly to host FPRL1. The protein is FPRL1 inhibitory protein (flr) of Staphylococcus aureus (strain MW2).